We begin with the raw amino-acid sequence, 87 residues long: Small ribosomal subunit protein uS17 (87 aa).

Belongs to the universal ribosomal protein uS17 family. Part of the 30S ribosomal subunit.

Its function is as follows. One of the primary rRNA binding proteins, it binds specifically to the 5'-end of 16S ribosomal RNA. This is Small ribosomal subunit protein uS17 from Aster yellows witches'-broom phytoplasma (strain AYWB).